The following is a 544-amino-acid chain: Chromosomal replication initiator protein DnaA (544 aa).

The tract at residues 1 to 71 (MNDFWQHCSA…ADMARDFWHT (71 aa)) is domain I, interacts with DnaA modulators. Positions 71-207 (TPIDVQFVLD…GETDSMYERS (137 aa)) are domain II. The segment covering 90 to 105 (AAAPAPASARPASAPG) has biased composition (low complexity). Disordered stretches follow at residues 90 to 111 (AAAPAPASARPASAPGSMGGSA) and 180 to 203 (AAARRTWRPGQSAGSNGNGETDSM). Residues 191 to 200 (SAGSNGNGET) show a composition bias toward polar residues. Residues 208-424 (KLNPVLTFDN…GALRKILAYS (217 aa)) are domain III, AAA+ region. Residues glycine 252, glycine 254, lysine 255, and threonine 256 each contribute to the ATP site. Residues 425-544 (KFHGREITIE…LHVLEQTLKG (120 aa)) are domain IV, binds dsDNA.

It belongs to the DnaA family. Oligomerizes as a right-handed, spiral filament on DNA at oriC.

It is found in the cytoplasm. Plays an essential role in the initiation and regulation of chromosomal replication. ATP-DnaA binds to the origin of replication (oriC) to initiate formation of the DNA replication initiation complex once per cell cycle. Binds the DnaA box (a 9 base pair repeat at the origin) and separates the double-stranded (ds)DNA. Forms a right-handed helical filament on oriC DNA; dsDNA binds to the exterior of the filament while single-stranded (ss)DNA is stabiized in the filament's interior. The ATP-DnaA-oriC complex binds and stabilizes one strand of the AT-rich DNA unwinding element (DUE), permitting loading of DNA polymerase. After initiation quickly degrades to an ADP-DnaA complex that is not apt for DNA replication. Binds acidic phospholipids. This is Chromosomal replication initiator protein DnaA from Paraburkholderia xenovorans (strain LB400).